A 278-amino-acid chain; its full sequence is uncharacterized protein (278 aa).

This is an uncharacterized protein from Schizosaccharomyces pombe (strain 972 / ATCC 24843) (Fission yeast).